The primary structure comprises 72 residues: Translation initiation factor IF-1 (72 aa).

Residues 1 to 72 enclose the S1-like domain; that stretch reads MAKEEAIEIE…SKGRITYRYK (72 aa).

It belongs to the IF-1 family. In terms of assembly, component of the 30S ribosomal translation pre-initiation complex which assembles on the 30S ribosome in the order IF-2 and IF-3, IF-1 and N-formylmethionyl-tRNA(fMet); mRNA recruitment can occur at any time during PIC assembly.

It is found in the cytoplasm. One of the essential components for the initiation of protein synthesis. Stabilizes the binding of IF-2 and IF-3 on the 30S subunit to which N-formylmethionyl-tRNA(fMet) subsequently binds. Helps modulate mRNA selection, yielding the 30S pre-initiation complex (PIC). Upon addition of the 50S ribosomal subunit IF-1, IF-2 and IF-3 are released leaving the mature 70S translation initiation complex. The polypeptide is Translation initiation factor IF-1 (Chlorobium luteolum (strain DSM 273 / BCRC 81028 / 2530) (Pelodictyon luteolum)).